The chain runs to 1079 residues: Ubiquitin carboxyl-terminal hydrolase 26 (1079 aa).

Residues 1-12 (MSRPNTRNKSKR) show a composition bias toward basic residues. Residues 1–21 (MSRPNTRNKSKRPRADDCESP) form a disordered region. Residues 106–446 (AGLTNLGATC…DAYMLMYKRI (341 aa)) form the USP domain. The active-site Nucleophile is the C115. H359 (proton acceptor) is an active-site residue. The segment at 384 to 419 (GLHPFGEKPGKSSDKTDQKPQGSSTADSVTNDDNNS) is disordered. Over residues 388–401 (FGEKPGKSSDKTDQ) the composition is skewed to basic and acidic residues. The segment covering 402 to 417 (KPQGSSTADSVTNDDN) has biased composition (polar residues). DUSP domains lie at 495 to 598 (AYIT…DDFC), 613 to 715 (DVYR…FPSD), and 738 to 862 (AVKL…AEIV). The disordered stretch occupies residues 948–972 (EASAAVPVPDRRTSKRSRRTTSGNS). The region spanning 961–1037 (SKRSRRTTSG…LWVKDSEIYE (77 aa)) is the Ubiquitin-like domain.

It belongs to the peptidase C19 family.

The protein resides in the nucleus. The catalysed reaction is Thiol-dependent hydrolysis of ester, thioester, amide, peptide and isopeptide bonds formed by the C-terminal Gly of ubiquitin (a 76-residue protein attached to proteins as an intracellular targeting signal).. Functionally, recognizes and hydrolyzes the peptide bond at the C-terminal Gly of ubiquitin. Involved in the processing of poly-ubiquitin precursors as well as that of ubiquitinated proteins. Deubiquitinates H2BK143ub1 of histone H2B. The sequence is that of Ubiquitin carboxyl-terminal hydrolase 26 (UBP26) from Oryza sativa subsp. japonica (Rice).